Here is a 233-residue protein sequence, read N- to C-terminus: Serine-rich 25 kDa antigen protein (233 aa).

The interval Lys-35–Ser-219 is disordered. Basic and acidic residues predominate over residues Ala-38–Ser-53. Over residues Ser-61–Glu-71 the composition is skewed to acidic residues. A run of 10 repeats spans residues Ser-82 to Ala-93, Ser-102 to Ala-113, Ser-114 to Ala-125, Ser-126 to Ala-137, Ser-138 to Ala-149, Ser-150 to Ala-161, Ser-162 to Ala-169, Ser-170 to Ala-177, Ser-178 to Ala-185, and Ser-186 to Ala-193. The interval Ser-82 to Ala-161 is 6 X 12 AA tandem repeats of S-S-S-D-K-P-D-N-K-P-E-A. Positions Ser-83–Pro-159 are enriched in basic and acidic residues. Over residues Glu-160–Glu-192 the composition is skewed to polar residues. The interval Ser-162–Ala-193 is 4 X 8 AA tandem repeats of S-S-T-N-K-P-E-A. Residues Ala-193 to Ser-219 are compositionally biased toward low complexity.

In terms of processing, phosphorylated on serine residue(s). O-glycosylated; glycans consist of single N-acetylglucosamine residues. Post-translationally, O-acylated; acyl group is probably palmitate, not myristate.

The protein resides in the cell membrane. Functionally, plays a role in the adhesion to host cells. Involved in the adhesion to host apoptotic cells thereby facilitating their phagocytosis. The sequence is that of Serine-rich 25 kDa antigen protein from Entamoeba histolytica (strain ATCC 30459 / HM-1:IMSS / ABRM).